Reading from the N-terminus, the 339-residue chain is Small ribosomal subunit biogenesis GTPase RsgA (339 aa).

Residues 111–271 (MRGLLKPVAA…LIDSPGIREF (161 aa)) form the CP-type G domain. GTP contacts are provided by residues 159 to 162 (NKAD) and 213 to 221 (GQSGVGKSS). The Zn(2+) site is built by cysteine 295, cysteine 300, histidine 302, and cysteine 308.

It belongs to the TRAFAC class YlqF/YawG GTPase family. RsgA subfamily. Monomer. Associates with 30S ribosomal subunit, binds 16S rRNA. Zn(2+) is required as a cofactor.

It is found in the cytoplasm. In terms of biological role, one of several proteins that assist in the late maturation steps of the functional core of the 30S ribosomal subunit. Helps release RbfA from mature subunits. May play a role in the assembly of ribosomal proteins into the subunit. Circularly permuted GTPase that catalyzes slow GTP hydrolysis, GTPase activity is stimulated by the 30S ribosomal subunit. The polypeptide is Small ribosomal subunit biogenesis GTPase RsgA (Pseudomonas aeruginosa (strain LESB58)).